Here is a 461-residue protein sequence, read N- to C-terminus: tRNA-2-methylthio-N(6)-dimethylallyladenosine synthase (461 aa).

The region spanning 25-143 (PTYSIITHGC…LPYLIDRHLS (119 aa)) is the MTTase N-terminal domain. Positions 34, 70, 104, 179, 183, and 186 each coordinate [4Fe-4S] cluster. Positions 165–395 (RDNEYVGYVN…LDVAYPIFYE (231 aa)) constitute a Radical SAM core domain. The 64-residue stretch at 398–461 (KSYLGTIQEV…SFALTGEMVD (64 aa)) folds into the TRAM domain.

The protein belongs to the methylthiotransferase family. MiaB subfamily. As to quaternary structure, monomer. [4Fe-4S] cluster is required as a cofactor.

The protein localises to the cytoplasm. It catalyses the reaction N(6)-dimethylallyladenosine(37) in tRNA + (sulfur carrier)-SH + AH2 + 2 S-adenosyl-L-methionine = 2-methylsulfanyl-N(6)-dimethylallyladenosine(37) in tRNA + (sulfur carrier)-H + 5'-deoxyadenosine + L-methionine + A + S-adenosyl-L-homocysteine + 2 H(+). In terms of biological role, catalyzes the methylthiolation of N6-(dimethylallyl)adenosine (i(6)A), leading to the formation of 2-methylthio-N6-(dimethylallyl)adenosine (ms(2)i(6)A) at position 37 in tRNAs that read codons beginning with uridine. This is tRNA-2-methylthio-N(6)-dimethylallyladenosine synthase from Finegoldia magna (strain ATCC 29328 / DSM 20472 / WAL 2508) (Peptostreptococcus magnus).